The chain runs to 87 residues: MKLTCVLVVLLLFLPYGDLITNNYIGGAARKVTPWRRNLKTRDVCDSLVGGNCIHNGCWCDQEAPHGNCCDTDGCTAAWWCPGTKWD.

Positions 1–19 (MKLTCVLVVLLLFLPYGDL) are cleaved as a signal peptide. A propeptide spanning residues 20–42 (ITNNYIGGAARKVTPWRRNLKTR) is cleaved from the precursor.

It belongs to the conotoxin O1 superfamily. Post-translationally, contains 4 disulfide bonds. As to expression, expressed by the venom duct.

The protein resides in the secreted. In Californiconus californicus (California cone), this protein is Conotoxin Cl12.3.